The primary structure comprises 204 residues: Recombination protein RecR (204 aa).

The segment at 63–78 (CNRCFNITVEDPCTIC) adopts a C4-type zinc-finger fold. The Toprim domain maps to 86–181 (RQVCVVEEPL…RVTRLARGLP (96 aa)).

It belongs to the RecR family.

Its function is as follows. May play a role in DNA repair. It seems to be involved in an RecBC-independent recombinational process of DNA repair. It may act with RecF and RecO. This is Recombination protein RecR from Herpetosiphon aurantiacus (strain ATCC 23779 / DSM 785 / 114-95).